Here is a 388-residue protein sequence, read N- to C-terminus: Chorismate synthase (388 aa).

The NADP(+) site is built by R39 and R45. The tract at residues 95–118 (EKNEKSRRVSRPRPGHADLVGGMK) is disordered. FMN contacts are provided by residues 130 to 132 (RSS), 251 to 252 (NA), G296, 311 to 315 (KPIPT), and R337.

Belongs to the chorismate synthase family. Homotetramer. It depends on FMNH2 as a cofactor.

It carries out the reaction 5-O-(1-carboxyvinyl)-3-phosphoshikimate = chorismate + phosphate. It participates in metabolic intermediate biosynthesis; chorismate biosynthesis; chorismate from D-erythrose 4-phosphate and phosphoenolpyruvate: step 7/7. Its function is as follows. Catalyzes the anti-1,4-elimination of the C-3 phosphate and the C-6 proR hydrogen from 5-enolpyruvylshikimate-3-phosphate (EPSP) to yield chorismate, which is the branch point compound that serves as the starting substrate for the three terminal pathways of aromatic amino acid biosynthesis. This reaction introduces a second double bond into the aromatic ring system. This is Chorismate synthase from Listeria monocytogenes serotype 4b (strain F2365).